The primary structure comprises 469 residues: GDP-fucose protein O-fucosyltransferase 3 (469 aa).

Over 1–9 the chain is Cytoplasmic; the sequence is MVNRIWEKR. The chain crosses the membrane as a helical; Signal-anchor for type II membrane protein span at residues 10 to 30; it reads FWISCFFIIFLFILVIFQVMV. Over 31–469 the chain is Lumenal; sequence ELGRFEKKET…EFWNLVFKFW (439 aa). N-linked (GlcNAc...) asparagine glycans are attached at residues Asn100, Asn158, Asn308, and Asn333. Cys379 and Cys382 are oxidised to a cystine. An N-linked (GlcNAc...) asparagine glycan is attached at Asn455.

This sequence belongs to the glycosyltransferase 10 family.

The protein localises to the endoplasmic reticulum membrane. The enzyme catalyses L-threonyl-[protein] + GDP-beta-L-fucose = 3-O-(alpha-L-fucosyl)-L-threonyl-[protein] + GDP + H(+). The catalysed reaction is L-seryl-[protein] + GDP-beta-L-fucose = 3-O-(alpha-L-fucosyl)-L-seryl-[protein] + GDP + H(+). The protein operates within protein modification; protein glycosylation. In terms of biological role, protein O-fucosyltransferase that specifically catalyzes O-fucosylation of serine or threonine residues in EMI domains of target proteins. Attaches fucose through an O-glycosidic linkage. O-fucosylation of EMI domain-containing proteins may be required for facilitating protein folding and secretion. The chain is GDP-fucose protein O-fucosyltransferase 3 (fut10) from Xenopus laevis (African clawed frog).